Reading from the N-terminus, the 663-residue chain is UvrABC system protein B (663 aa).

Residues 30 to 414 (EGIKAGKRHQ…IEHTDKMVEQ (385 aa)) form the Helicase ATP-binding domain. Residue 43–50 (GATGTGKT) coordinates ATP. A Beta-hairpin motif is present at residues 96–119 (YYDYYQPEAYVPSTDTFIEKDASI). A Helicase C-terminal domain is found at 434–600 (QIDDLLSEIQ…TINKKIHDLI (167 aa)). The 36-residue stretch at 627–662 (QKTIDNIEKEMKQAAKDLDFEKATELRDMLFELKAE) folds into the UVR domain.

The protein belongs to the UvrB family. As to quaternary structure, forms a heterotetramer with UvrA during the search for lesions. Interacts with UvrC in an incision complex.

The protein resides in the cytoplasm. The UvrABC repair system catalyzes the recognition and processing of DNA lesions. A damage recognition complex composed of 2 UvrA and 2 UvrB subunits scans DNA for abnormalities. Upon binding of the UvrA(2)B(2) complex to a putative damaged site, the DNA wraps around one UvrB monomer. DNA wrap is dependent on ATP binding by UvrB and probably causes local melting of the DNA helix, facilitating insertion of UvrB beta-hairpin between the DNA strands. Then UvrB probes one DNA strand for the presence of a lesion. If a lesion is found the UvrA subunits dissociate and the UvrB-DNA preincision complex is formed. This complex is subsequently bound by UvrC and the second UvrB is released. If no lesion is found, the DNA wraps around the other UvrB subunit that will check the other stand for damage. The chain is UvrABC system protein B from Staphylococcus aureus (strain MSSA476).